We begin with the raw amino-acid sequence, 112 residues long: C-type natriuretic peptide 3 (112 aa).

A signal peptide spans 1–19 (MSLRAFMLCVCLLLQSVGA). The propeptide occupies 20–90 (RPASELQNLE…SKRSWGRYKK (71 aa)). Positions 33-67 (QDQLSSTEHPEEDRLDRTREEPQLGGSSSREAADE) are disordered. The segment covering 40–54 (EHPEEDRLDRTREEP) has biased composition (basic and acidic residues). C96 and C112 are disulfide-bonded.

This sequence belongs to the natriuretic peptide family. Spinal cord, kidney, ovary, heart and spleen, and to a lower extent in brain and liver.

It is found in the secreted. Exhibits natriuretic and vasodepressant activity. Has cGMP-stimulating activity. May help to regulate body fluid homeostasis in a variety of aquatic environments. The sequence is that of C-type natriuretic peptide 3 from Oryzias latipes (Japanese rice fish).